Consider the following 717-residue polypeptide: Catalase-peroxidase (717 aa).

The N-terminal stretch at 1-12 is a signal peptide; sequence MTSKGMCPVAHG. Positions 93–221 form a cross-link, tryptophyl-tyrosyl-methioninium (Trp-Tyr) (with M-247); sequence WHSAGSYRIA…LAAVMMGLIY (129 aa). His94 acts as the Proton acceptor in catalysis. The segment at residues 221–247 is a cross-link (tryptophyl-tyrosyl-methioninium (Tyr-Met) (with W-93)); it reads YVNPEGVDGKPDPLKTAQDMRVTFARM. His262 lines the heme b pocket.

Belongs to the peroxidase family. Peroxidase/catalase subfamily. Homodimer or homotetramer. Requires heme b as cofactor. Formation of the three residue Trp-Tyr-Met cross-link is important for the catalase, but not the peroxidase activity of the enzyme.

It catalyses the reaction H2O2 + AH2 = A + 2 H2O. The catalysed reaction is 2 H2O2 = O2 + 2 H2O. Bifunctional enzyme with both catalase and broad-spectrum peroxidase activity. The protein is Catalase-peroxidase of Polynucleobacter asymbioticus (strain DSM 18221 / CIP 109841 / QLW-P1DMWA-1) (Polynucleobacter necessarius subsp. asymbioticus).